The primary structure comprises 678 residues: Probable antibacterial peptide polyprotein (678 aa).

Repeat copies occupy residues 1 to 67 (MRSP…PEVR), 68 to 114 (ERRS…PEVR), 115 to 161 (ERRS…PEVR), 162 to 208 (ERRS…PEVR), 209 to 255 (ERRS…PEVR), 256 to 302 (ERGS…PEVR), 303 to 349 (ERRS…PEVR), 350 to 396 (ERRS…PEVR), 397 to 443 (ERRS…PEVR), 444 to 490 (ERRS…PEVR), 491 to 537 (ERRS…PEVR), 538 to 584 (ERRS…PEVR), 585 to 631 (ERRS…PEVR), and 632 to 678 (ERRS…PEVR). Residues 1 to 678 (MRSPRVIHLA…SEGVVLPEVR (678 aa)) are 14 X approximate tandem repeats. O-linked (GalNAc...) threonine glycosylation is present at Thr-32. Disordered regions lie at residues 58–97 (SEAELLPEVRERRSPVDKGGYLPRPTPPRPVYRSRRDASL) and 113–678 (VRER…PEVR). Basic and acidic residues predominate over residues 64 to 73 (PEVRERRSPV). O-linked (GalNAc...) threonine glycosylation is found at Thr-83 and Thr-130. A compositionally biased stretch (low complexity) spans 145-157 (ESELSPLSEAEVL). The span at 158–167 (PEVRERRSPV) shows a compositional bias: basic and acidic residues. A glycan (O-linked (GalNAc...) threonine) is linked at Thr-177. A compositionally biased stretch (low complexity) spans 188-204 (VASLESELSPLSEAEVL). The span at 205 to 214 (PEVRERRSPV) shows a compositional bias: basic and acidic residues. O-linked (GalNAc...) threonine glycosylation is found at Thr-224 and Thr-271. Residues 299–308 (PEVRERRSPV) show a composition bias toward basic and acidic residues. Thr-318 carries an O-linked (GalNAc...) threonine glycan. Positions 333 to 345 (ESELSPLSEAEVL) are enriched in low complexity. A compositionally biased stretch (basic and acidic residues) spans 346–355 (PEVRERRSPV). Residue Thr-365 is glycosylated (O-linked (GalNAc...) threonine). Positions 380–392 (ESELSPLSEAEVL) are enriched in low complexity. The segment covering 393 to 402 (PEVRERRSPV) has biased composition (basic and acidic residues). Residue Thr-412 is glycosylated (O-linked (GalNAc...) threonine). Residues 427–439 (ESELSPLSEAEVL) show a composition bias toward low complexity. Over residues 440-449 (PEVRERRSPV) the composition is skewed to basic and acidic residues. Thr-459 is a glycosylation site (O-linked (GalNAc...) threonine). Over residues 474 to 486 (ESELSPLSEAEVL) the composition is skewed to low complexity. The span at 487-496 (PEVRERRSPV) shows a compositional bias: basic and acidic residues. Residue Thr-506 is glycosylated (O-linked (GalNAc...) threonine). Positions 521 to 533 (ESELSPSSEAEVL) are enriched in low complexity. Residues 534–543 (PEVRERRSPV) are compositionally biased toward basic and acidic residues. Thr-553 is a glycosylation site (O-linked (GalNAc...) threonine). The span at 568-580 (ESELSPLSEAEVL) shows a compositional bias: low complexity. Over residues 581-590 (PEVRERRSPV) the composition is skewed to basic and acidic residues. O-linked (GalNAc...) threonine glycosylation occurs at Thr-600. The span at 615–627 (ESELSPLSEAEGL) shows a compositional bias: low complexity. Thr-647 is a glycosylation site (O-linked (GalNAc...) threonine).

It localises to the secreted. In terms of biological role, has antibacterial activity in vitro. This Riptortus clavatus (Bean bug) protein is Probable antibacterial peptide polyprotein.